Consider the following 542-residue polypeptide: Dihydropyrimidinase (542 aa).

Residues His62, His64, and Lys167 each contribute to the Zn(2+) site. N6-carboxylysine is present on Lys167. Tyr172 serves as a coordination point for substrate. Zn(2+) is bound by residues His199 and His255. Position 331 (Ser331) interacts with substrate. A Zn(2+)-binding site is contributed by Asp358. Asn392 is a substrate binding site.

The protein belongs to the metallo-dependent hydrolases superfamily. Hydantoinase/dihydropyrimidinase family. In terms of assembly, homotetramer. The cofactor is Zn(2+). Post-translationally, carboxylation allows a single lysine to coordinate two zinc ions.

The enzyme catalyses 5,6-dihydrouracil + H2O = 3-(carbamoylamino)propanoate + H(+). Catalyzes the second step of the reductive pyrimidine degradation, the reversible hydrolytic ring opening of dihydropyrimidines. Can catalyze the ring opening of 5,6-dihydrouracil to N-carbamyl-alanine and of 5,6-dihydrothymine to N-carbamyl-amino isobutyrate. The polypeptide is Dihydropyrimidinase (PYD2) (Lachancea kluyveri (strain ATCC 58438 / CBS 3082 / BCRC 21498 / NBRC 1685 / JCM 7257 / NCYC 543 / NRRL Y-12651) (Yeast)).